We begin with the raw amino-acid sequence, 282 residues long: Caspase-3 (282 aa).

Residues His-131 and Cys-174 contribute to the active site.

Belongs to the peptidase C14A family. Heterotetramer that consists of two anti-parallel arranged heterodimers, each one formed by a 17 kDa (p17) and a 12 kDa (p12) subunit.

Its subcellular location is the cytoplasm. It carries out the reaction Strict requirement for an Asp residue at positions P1 and P4. It has a preferred cleavage sequence of Asp-Xaa-Xaa-Asp-|- with a hydrophobic amino-acid residue at P2 and a hydrophilic amino-acid residue at P3, although Val or Ala are also accepted at this position.. Functionally, important mediator of apoptosis. At the onset of apoptosis, it proteolytically cleaves poly(ADP-ribose) polymerase PARP1 at a '216-Asp-|-Gly-217' bond. The chain is Caspase-3 (casp3) from Xenopus laevis (African clawed frog).